The primary structure comprises 557 residues: Formate--tetrahydrofolate ligase (557 aa).

Position 67–74 (67–74 (TPAGEGKT)) interacts with ATP.

This sequence belongs to the formate--tetrahydrofolate ligase family.

The catalysed reaction is (6S)-5,6,7,8-tetrahydrofolate + formate + ATP = (6R)-10-formyltetrahydrofolate + ADP + phosphate. Its pathway is one-carbon metabolism; tetrahydrofolate interconversion. This Cereibacter sphaeroides (strain KD131 / KCTC 12085) (Rhodobacter sphaeroides) protein is Formate--tetrahydrofolate ligase.